The following is a 151-amino-acid chain: Receptor activity-modifying protein 3 (151 aa).

The signal sequence occupies residues 1-30 (MEATAPRRRHLLPLLLLLLLLCGECPPVSG). Residues 31-116 (CNEKRMLAML…CSVDRQQWQD (86 aa)) lie on the Extracellular side of the membrane. 2 cysteine pairs are disulfide-bonded: C43/C75 and C60/C107. 2 N-linked (GlcNAc...) asparagine glycosylation sites follow: N61 and N106. Residues 117-141 (PPDEILIPLIVVPILLTLAMTGLVV) form a helical membrane-spanning segment. The Cytoplasmic portion of the chain corresponds to 142 to 151 (WRSKRAAQVV).

Belongs to the RAMP family. As to quaternary structure, heterodimer of CALCRL and RAMP3; interaction induces allosteric modulation of CALCRL function and ligand specificity for adrenomedullin/ADM and intermedin/ADM2. Heterodimer of CALCR and RAMP3; interaction form the receptor complex AMYR3 for amylin/IAPP. Interacts with GPER1.

The protein resides in the cell membrane. The protein localises to the membrane. Its function is as follows. Accessory protein that interacts with and modulates the function of G-protein coupled receptors including calcitonin gene-related peptide type 1 receptor (CALCRL), calcitonin receptor (CALCR) and G-protein coupled estrogen receptor 1 (GPER1). Required for the transport of CALCRL and GPER1 receptors to the plasma membrane. Plays a role in cardioprotection by reducing cardiac hypertrophy and perivascular fibrosis in a GPER1-dependent manner. Together with CALCRL, form a receptor complex for adrenomedullin/ADM and intermedin/ADM2. Together with CALCR, act as a receptor complex for amylin/IAPP. In Sus scrofa (Pig), this protein is Receptor activity-modifying protein 3 (RAMP3).